Consider the following 61-residue polypeptide: Sperm protamine P1 (61 aa).

Positions 1-61 (MARYRRRSRS…RRYSRRGRRR (61 aa)) are disordered.

It belongs to the protamine P1 family. In terms of tissue distribution, testis.

It localises to the nucleus. The protein localises to the chromosome. Functionally, protamines substitute for histones in the chromatin of sperm during the haploid phase of spermatogenesis. They compact sperm DNA into a highly condensed, stable and inactive complex. The protein is Sperm protamine P1 (PRM1) of Dasyurus hallucatus (Northern quoll).